A 132-amino-acid polypeptide reads, in one-letter code: Replication enhancer protein (132 aa).

The protein belongs to the geminiviridae replication enhancer protein family. In terms of assembly, homooligomer. Interacts with the replication-associated protein (REP). Interacts with host proliferating cell nuclear antigen (PCNA). Interacts with host retinoblastoma-related protein 1 (RBR1), and may thereby deregulate the host cell cycle. Oligomerization and interaction with PCNA are necessary for optimal replication enhancement.

Functionally, increases viral DNA accumulation. Enhances infectivity and symptom expression. This Macroptilium lathyroides (Lima bean) protein is Replication enhancer protein.